The sequence spans 89 residues: Small ribosomal subunit protein uS15 (89 aa).

Positions 1-10 are enriched in basic and acidic residues; sequence MSITAERKAE. A disordered region spans residues 1-24; sequence MSITAERKAEVIQGNANKAGDTGS.

It belongs to the universal ribosomal protein uS15 family. As to quaternary structure, part of the 30S ribosomal subunit. Forms a bridge to the 50S subunit in the 70S ribosome, contacting the 23S rRNA.

One of the primary rRNA binding proteins, it binds directly to 16S rRNA where it helps nucleate assembly of the platform of the 30S subunit by binding and bridging several RNA helices of the 16S rRNA. In terms of biological role, forms an intersubunit bridge (bridge B4) with the 23S rRNA of the 50S subunit in the ribosome. In Rhodopseudomonas palustris (strain BisB5), this protein is Small ribosomal subunit protein uS15.